The chain runs to 144 residues: Maximins 3/H16 (144 aa).

Residues 1–18 (MNFKYIVAVSFLIASAYA) form the signal peptide. 2 propeptides span residues 19-43 (RSVQ…REIR) and 73-122 (RTAE…KKEK). Position 143 is an isoleucine amide (isoleucine 143).

This sequence belongs to the bombinin family. As to expression, expressed by the skin glands.

The protein localises to the secreted. In terms of biological role, maximin-3 shows antibacterial activity against both Gram-positive and Gram-negative bacteria. It also shows antimicrobial activity against the fungus C.albicans, but not against A.flavus nor P.uticale. It has little hemolytic activity. It possess a significant cytotoxicity against tumor cell lines. It possess a significant anti-HIV activity. It shows high spermicidal activity. Its function is as follows. Maximin-H16 shows antimicrobial activity against bacteria and against the fungus C.albicans. Shows strong hemolytic activity. The chain is Maximins 3/H16 from Bombina maxima (Giant fire-bellied toad).